Here is a 383-residue protein sequence, read N- to C-terminus: Glutamate 5-kinase (383 aa).

Lys17 contributes to the ATP binding site. Substrate-binding residues include Ser64, Asp151, and Asn165. ATP is bound at residue 185 to 186; it reads SD. Residues 291–367 form the PUA domain; sequence SGTIRVDAGA…DEIEGILGYN (77 aa).

The protein belongs to the glutamate 5-kinase family.

It is found in the cytoplasm. The catalysed reaction is L-glutamate + ATP = L-glutamyl 5-phosphate + ADP. Its pathway is amino-acid biosynthesis; L-proline biosynthesis; L-glutamate 5-semialdehyde from L-glutamate: step 1/2. Its function is as follows. Catalyzes the transfer of a phosphate group to glutamate to form L-glutamate 5-phosphate. This Methanosarcina barkeri (strain Fusaro / DSM 804) protein is Glutamate 5-kinase.